The sequence spans 597 residues: Nuclear receptor subfamily 4 group A member 1 (597 aa).

Residues 1-22 (MPCIQAQYGTPATSPGPRDHLT) form a disordered region. Positions 170 to 465 (RVWTEQLPKA…PGEGKLIFCS (296 aa)) are required for nuclear import. Positions 263-338 (EGRCAVCGDN…VGMVKEVVRT (76 aa)) form a DNA-binding region, nuclear receptor. NR C4-type zinc fingers lie at residues 266–286 (CAVC…CEGC) and 302–326 (CLAN…FQKC). The segment at 267-353 (AVCGDNASCQ…RRGRLPSKPK (87 aa)) is required for binding NBRE-containing DNA. The required for the interaction with RXRA stretch occupies residues 298-360 (AKYICLANKD…KPKQPPDASP (63 aa)). S340 carries the phosphoserine; by PKA modification. The interval 341 to 360 (LKGRRGRLPSKPKQPPDASP) is disordered. Phosphoserine; by PKA, RPS6KA1 and RPS6KA3 is present on S350. Residues 359–594 (SPTNLLTSLI…PIVDKIFMDT (236 aa)) enclose the NR LBD domain. The binds lipopolysaccharide stretch occupies residues 520–543 (PRRVEELQNRIASCLKEHMAAVAG). The tract at residues 583–594 (PPPIVDKIFMDT) is AF-2.

The protein belongs to the nuclear hormone receptor family. NR4 subfamily. As to quaternary structure, binds the NGFI-B response element (NBRE) as a monomer. Binds the Nur response element (NurRE), consisting of two inverse NBRE-related octanucleotide repeats separated by 6 base-pairs, as a dimer. Interacts (via N-terminus) with NLRP3 (via LRR repeat domain); the interaction is direct, requires binding of NR4A1/Nur77 to NBRE-containing dsDNA and lipopolysaccharide, and leads to non-canonical NLRP3 inflammasome activation. Interacts with GADD45GIP1. Interacts with STK11. Interacts with IFI27. Heterodimer (via DNA-binding domain) with RXRA (via C-terminus); DNA-binding of the heterodimer is enhanced by 9-cis retinoic acid. Competes for the RXRA interaction with EP300 and thereby attenuates EP300 mediated acetylation of RXRA. Interacts with NCOA1. Interacts with NCOA2. Interacts with NCOA3. It depends on Zn(2+) as a cofactor. Post-translationally, phosphorylated at Ser-350 by RPS6KA1 and RPS6KA3 in response to mitogenic or stress stimuli. Phosphorylation of Ser-350 results in decrease in NBRE binding while phosphorylation of Ser-340 has little effect on it. In terms of processing, acetylated by p300/CBP, acetylation increases stability. Deacetylated by HDAC1. In terms of tissue distribution, expressed in lung, brain and superior cervical ganglia. High levels are seen in the adrenal tissue.

Its subcellular location is the nucleus. The protein localises to the cytoplasm. It localises to the cytosol. The protein resides in the mitochondrion. Its function is as follows. Orphan nuclear receptor. Binds the NGFI-B response element (NBRE) 5'-AAAGGTCA-3'. Binds 9-cis-retinoic acid outside of its ligand-binding (NR LBD) domain. Participates in energy homeostasis by sequestrating the kinase STK11 in the nucleus, thereby attenuating cytoplasmic AMPK activation. Regulates the inflammatory response in macrophages by regulating metabolic adaptations during inflammation, including repressing the transcription of genes involved in the citric acid cycle (TCA). Inhibits NF-kappa-B signaling by binding to low-affinity NF-kappa-B binding sites, such as at the IL2 promoter. May act concomitantly with NR4A2 in regulating the expression of delayed-early genes during liver regeneration. Plays a role in the vascular response to injury. Functionally, in the cytosol, upon its detection of both bacterial lipopolysaccharide (LPS) and NBRE-containing mitochondrial DNA released by GSDMD pores during pyroptosis, it promotes non-canonical NLRP3 inflammasome activation by stimulating association of NLRP3 and NEK7. This chain is Nuclear receptor subfamily 4 group A member 1 (Nr4a1), found in Rattus norvegicus (Rat).